Here is a 289-residue protein sequence, read N- to C-terminus: Polyamine aminopropyltransferase (289 aa).

Residues 5-238 (TVWHETLHDQ…GIMTFAWATD (234 aa)) enclose the PABS domain. Position 33 (Gln-33) interacts with S-methyl-5'-thioadenosine. The spermidine site is built by His-64 and Asp-88. S-methyl-5'-thioadenosine contacts are provided by residues Glu-108 and 140–141 (DG). Asp-158 serves as the catalytic Proton acceptor. Residue 158-161 (DCTD) participates in spermidine binding. Position 165 (Pro-165) interacts with S-methyl-5'-thioadenosine.

This sequence belongs to the spermidine/spermine synthase family. As to quaternary structure, homodimer or homotetramer.

It localises to the cytoplasm. It catalyses the reaction S-adenosyl 3-(methylsulfanyl)propylamine + putrescine = S-methyl-5'-thioadenosine + spermidine + H(+). The protein operates within amine and polyamine biosynthesis; spermidine biosynthesis; spermidine from putrescine: step 1/1. In terms of biological role, catalyzes the irreversible transfer of a propylamine group from the amino donor S-adenosylmethioninamine (decarboxy-AdoMet) to putrescine (1,4-diaminobutane) to yield spermidine. This is Polyamine aminopropyltransferase from Enterobacter sp. (strain 638).